Here is a 327-residue protein sequence, read N- to C-terminus: PDZ and LIM domain protein 1 (327 aa).

At threonine 2 the chain carries N-acetylthreonine. The PDZ domain occupies 3 to 85 (TQQIVLQGPG…NMTLTVSRSE (83 aa)). A phosphoserine mark is found at serine 90 and serine 130. Residue tyrosine 142 is modified to Phosphotyrosine. A disordered region spans residues 161–184 (VESKTSASGEEANSRPVVQPHPSG). One can recognise an LIM zinc-binding domain in the interval 256 to 315 (PICDKCGTGIVGVFVKLRDHHRHPECYVCTDCGINLKQKGHFFVEDQIYCEKHARERVTP). Positions 258, 261, 278, 281, 284, 287, 305, and 308 each coordinate Zn(2+). Threonine 314 carries the phosphothreonine modification. Tyrosine 319 is subject to Phosphotyrosine.

Interacts with ACTN1, ACTN2 and ACTN4. Interacts with PDLIM4. In terms of tissue distribution, expressed in heart, lung, spleen, testis and skeletal muscle.

The protein resides in the cytoplasm. It is found in the cytoskeleton. The protein localises to the myofibril. It localises to the sarcomere. Its subcellular location is the z line. Cytoskeletal protein that may act as an adapter that brings other proteins (like kinases) to the cytoskeleton. Involved in assembly, disassembly and directioning of stress fibers in fibroblasts. Required for the localization of ACTN1 and PALLD to stress fibers. Required for cell migration and in maintaining cell polarity of fibroblasts. This chain is PDZ and LIM domain protein 1 (Pdlim1), found in Mus musculus (Mouse).